The chain runs to 119 residues: uncharacterized protein (119 aa).

The next 2 membrane-spanning stretches (helical) occupy residues 19–39 (FYPS…PSFL) and 68–88 (FPWF…PWLL).

The protein resides in the membrane. This is an uncharacterized protein from Saccharomyces cerevisiae (strain ATCC 204508 / S288c) (Baker's yeast).